The sequence spans 662 residues: DCC-interacting protein 13-beta (662 aa).

Residues 1–428 (MPAVDKLLLE…NSDIEDDNIV (428 aa)) are required for RAB5A binding. Positions 3–268 (AVDKLLLEEA…ESVYTPDIDV (266 aa)) constitute a BAR domain. One can recognise a PH domain in the interval 277 to 375 (LIQKTGYLNL…WICAVNNISR (99 aa)). Residues 486 to 635 (SLLQQMFIVR…LMLSVPLTND (150 aa)) enclose the PID domain. Residues 642–662 (NDQADDTGGSPSENRGAESEA) are disordered.

Homodimer. Homotetramer. Binds RAB5A/Rab5 through an N-terminal domain. This interaction is essential for its recruitment to endosomal membranes as well as its role in cell proliferation. Binds subunits of the NuRD/MeCP1 complex. Interacts with FSHR; interaction is independent of follicle stimulating hormone stimulation. Interacts with APPL1; the interaction is decreased by adiponectin in a time-dependent manner. Forms a complex comprising APPL1, RUVBL2, CTNNB1, HDAC1 and HDAC2; interaction reduces interaction between CTNNB1, HDAC1, HDAC2 and RUVBL2 leading to the decrease of deacetylase activity of this complex; affects the recruitment of repressive complexes to the Wnt target genes. Interacts (via BAR domain) with TBC1D1; interaction is dependent of TBC1D1 phosphorylation at 'Ser-235'; interaction diminishes the phosphorylation of TBC1D1 at 'Thr-596', resulting in inhibition of SLC2A4 translocation and glucose uptake. Interacts with ANXA2; targets APPL2 to endosomes and acting in parallel to RAB5A. Interacts with RAB31 (in GTP-bound form); interaction contributes to or enhances recruitment of APPL2 to the phagosomes; interaction enhances Fc-gamma receptor-mediated phagocytosis through PI3K/Akt signaling in macrophages. Interacts with PIK3R1; forms a complex with PIK3R1 and APPL1. Interacts (via BAR domain) with ADIPOR1; hinders the accessibility of APPL1 to ADIPOR1; negatively regulates adiponectin signaling; ADIPOQ dissociates this interaction and facilitates the recruitment of APPL1 to ADIPOR1. Interacts (via BAR domain) with ADIPOR2; ADIPOQ dissociates this interaction. In terms of tissue distribution, expressed in insulin-target tissues including skeletal muscle, liver, fat, and brain. Highly expressed in kidney and pancreas. Abundantly expressed in the ventromedial hypothalamus (VMH), barely detectable in the arcuate nucleus (ARC) and paraventricular nucleus (PVN) of the hypothalamus. Also expressed in pancreatic beta-cells.

The protein resides in the early endosome membrane. It is found in the nucleus. The protein localises to the cell membrane. It localises to the endosome membrane. Its subcellular location is the cytoplasm. The protein resides in the cytoplasmic vesicle. It is found in the phagosome. The protein localises to the cell projection. It localises to the ruffle. Its subcellular location is the ruffle membrane. The protein resides in the phagosome membrane. Functionally, multifunctional adapter protein that binds to various membrane receptors, nuclear factors and signaling proteins to regulate many processes, such as cell proliferation, immune response, endosomal trafficking and cell metabolism. Regulates signaling pathway leading to cell proliferation through interaction with RAB5A and subunits of the NuRD/MeCP1 complex. Plays a role in immune response by modulating phagocytosis, inflammatory and innate immune responses. In macrophages, enhances Fc-gamma receptor-mediated phagocytosis through interaction with RAB31 leading to activation of PI3K/Akt signaling. In response to LPS, modulates inflammatory responses by playing a key role on the regulation of TLR4 signaling and in the nuclear translocation of RELA/NF-kappa-B p65 and the secretion of pro- and anti-inflammatory cytokines. Also functions as a negative regulator of innate immune response via inhibition of AKT1 signaling pathway by forming a complex with APPL1 and PIK3R1. Plays a role in endosomal trafficking of TGFBR1 from the endosomes to the nucleus. Plays a role in cell metabolism by regulating adiponectin and insulin signaling pathways and adaptative thermogenesis. In muscle, negatively regulates adiponectin-simulated glucose uptake and fatty acid oxidation by inhibiting adiponectin signaling pathway through APPL1 sequestration thereby antagonizing APPL1 action. In muscles, negatively regulates insulin-induced plasma membrane recruitment of GLUT4 and glucose uptake through interaction with TBC1D1. Plays a role in cold and diet-induced adaptive thermogenesis by activating ventromedial hypothalamus (VMH) neurons throught AMPK inhibition which enhances sympathetic outflow to subcutaneous white adipose tissue (sWAT), sWAT beiging and cold tolerance. Also plays a role in other signaling pathways namely Wnt/beta-catenin, HGF and glucocorticoid receptor signaling. Positive regulator of beta-catenin/TCF-dependent transcription through direct interaction with RUVBL2/reptin resulting in the relief of RUVBL2-mediated repression of beta-catenin/TCF target genes by modulating the interactions within the beta-catenin-reptin-HDAC complex. May affect adult neurogenesis in hippocampus and olfactory system via regulating the sensitivity of glucocorticoid receptor. Required for fibroblast migration through HGF cell signaling. The chain is DCC-interacting protein 13-beta from Mus musculus (Mouse).